The following is a 143-amino-acid chain: D-aminoacyl-tRNA deacylase (143 aa).

Residues 135-136 carry the Gly-cisPro motif, important for rejection of L-amino acids motif; it reads GP.

Belongs to the DTD family. As to quaternary structure, homodimer.

It is found in the cytoplasm. It catalyses the reaction glycyl-tRNA(Ala) + H2O = tRNA(Ala) + glycine + H(+). It carries out the reaction a D-aminoacyl-tRNA + H2O = a tRNA + a D-alpha-amino acid + H(+). An aminoacyl-tRNA editing enzyme that deacylates mischarged D-aminoacyl-tRNAs. Also deacylates mischarged glycyl-tRNA(Ala), protecting cells against glycine mischarging by AlaRS. Acts via tRNA-based rather than protein-based catalysis; rejects L-amino acids rather than detecting D-amino acids in the active site. By recycling D-aminoacyl-tRNA to D-amino acids and free tRNA molecules, this enzyme counteracts the toxicity associated with the formation of D-aminoacyl-tRNA entities in vivo and helps enforce protein L-homochirality. The chain is D-aminoacyl-tRNA deacylase from Mycobacterium marinum (strain ATCC BAA-535 / M).